The sequence spans 123 residues: Protein Rev (123 aa).

Residues S5 and S8 each carry the phosphoserine; by host CK2 modification. The tract at residues 18-26 (IIKILYQSN) is homomultimerization. Disordered regions lie at residues 24 to 49 (QSNP…RARQ) and 82 to 123 (TLDS…GAKN). The Nuclear localization signal and RNA-binding (RRE) signature appears at 34–50 (SRQARRNRRRRWRARQR). Residues 36 to 49 (QARRNRRRRWRARQ) are compositionally biased toward basic residues. Positions 73 to 84 (LPLPPIERLTLD) match the Nuclear export signal and binding to XPO1 motif. Polar residues predominate over residues 97–112 (PQGTETGTGSPNTPEG).

It belongs to the HIV-1 REV protein family. Homomultimer; when bound to the RRE. Multimeric assembly is essential for activity and may involve XPO1. Binds to human KPNB1, XPO1, TNPO1, RANBP5 and IPO7. Interacts with the viral Integrase. Interacts with human KHDRBS1. Interacts with human NAP1; this interaction decreases Rev multimerization and stimulates its activity. Interacts with human DEAD-box helicases DDX3 and DDX24; these interactions may serve for viral RNA export to the cytoplasm and packaging, respectively. Interacts with human PSIP1; this interaction may inhibit HIV-1 DNA integration by promoting dissociation of the Integrase-LEDGF/p75 complex. In terms of processing, asymmetrically arginine dimethylated at one site by host PRMT6. Methylation impairs the RNA-binding activity and export of viral RNA from the nucleus to the cytoplasm. Post-translationally, phosphorylated by protein kinase CK2. Presence of, and maybe binding to the N-terminus of the regulatory beta subunit of CK2 is necessary for CK2-mediated Rev's phosphorylation.

The protein localises to the host nucleus. Its subcellular location is the host nucleolus. The protein resides in the host cytoplasm. Escorts unspliced or incompletely spliced viral pre-mRNAs (late transcripts) out of the nucleus of infected cells. These pre-mRNAs carry a recognition sequence called Rev responsive element (RRE) located in the env gene, that is not present in fully spliced viral mRNAs (early transcripts). This function is essential since most viral proteins are translated from unspliced or partially spliced pre-mRNAs which cannot exit the nucleus by the pathway used by fully processed cellular mRNAs. Rev itself is translated from a fully spliced mRNA that readily exits the nucleus. Rev's nuclear localization signal (NLS) binds directly to KPNB1/Importin beta-1 without previous binding to KPNA1/Importin alpha-1. KPNB1 binds to the GDP bound form of RAN (Ran-GDP) and targets Rev to the nucleus. In the nucleus, the conversion from Ran-GDP to Ran-GTP dissociates Rev from KPNB1 and allows Rev's binding to the RRE in viral pre-mRNAs. Rev multimerization on the RRE via cooperative assembly exposes its nuclear export signal (NES) to the surface. Rev can then form a complex with XPO1/CRM1 and Ran-GTP, leading to nuclear export of the complex. Conversion from Ran-GTP to Ran-GDP mediates dissociation of the Rev/RRE/XPO1/RAN complex, so that Rev can return to the nucleus for a subsequent round of export. Beside KPNB1, also seems to interact with TNPO1/Transportin-1, RANBP5/IPO5 and IPO7/RANBP7 for nuclear import. The nucleoporin-like HRB/RIP is an essential cofactor that probably indirectly interacts with Rev to release HIV RNAs from the perinuclear region to the cytoplasm. In Simian immunodeficiency virus (isolate MB66) (SIV-cpz), this protein is Protein Rev.